The sequence spans 189 residues: Small ribosomal subunit protein uS5 (189 aa).

The region spanning 22–85 (FVDKLVAINR…EAAKRELIFV (64 aa)) is the S5 DRBM domain.

Belongs to the universal ribosomal protein uS5 family. As to quaternary structure, part of the 30S ribosomal subunit. Contacts proteins S4 and S8.

Its function is as follows. With S4 and S12 plays an important role in translational accuracy. Located at the back of the 30S subunit body where it stabilizes the conformation of the head with respect to the body. The protein is Small ribosomal subunit protein uS5 of Rhizobium etli (strain CIAT 652).